The sequence spans 158 residues: Urease accessory protein UreE (158 aa).

It belongs to the UreE family.

It localises to the cytoplasm. Its function is as follows. Involved in urease metallocenter assembly. Binds nickel. Probably functions as a nickel donor during metallocenter assembly. The protein is Urease accessory protein UreE of Klebsiella pneumoniae subsp. pneumoniae (strain ATCC 700721 / MGH 78578).